A 740-amino-acid chain; its full sequence is UvrABC system protein B (740 aa).

Positions 1–36 (MTIAIRTTLDEPENHSDFVPHRPSRPEKTEPSKPFR) are disordered. The span at 8 to 33 (TLDEPENHSDFVPHRPSRPEKTEPSK) shows a compositional bias: basic and acidic residues. The 389-residue stretch at 56 to 444 (KDIQKGERDQ…GGVFVEQIIR (389 aa)) folds into the Helicase ATP-binding domain. Residue 69 to 76 (GVTGSGKT) participates in ATP binding. The short motif at 122-145 (YYDYYQPEAYVPRTDTYIEKDSAI) is the Beta-hairpin element. One can recognise a Helicase C-terminal domain in the interval 461-627 (QVDNLIFEAK…TVKRQVDDIV (167 aa)). In terms of domain architecture, UVR spans 651–686 (ARSISETEKEMLEAAANLEFEKAAQLRDVLHQLKRQ). The segment at 687 to 740 (ELGLPPEKSSEIQGRSEAGRPGTRKTRSDKAREAKASKRVKQEAGEKLLRSRGH) is disordered. Residues 712 to 740 (TRSDKAREAKASKRVKQEAGEKLLRSRGH) show a composition bias toward basic and acidic residues.

It belongs to the UvrB family. Forms a heterotetramer with UvrA during the search for lesions. Interacts with UvrC in an incision complex.

The protein localises to the cytoplasm. Functionally, the UvrABC repair system catalyzes the recognition and processing of DNA lesions. A damage recognition complex composed of 2 UvrA and 2 UvrB subunits scans DNA for abnormalities. Upon binding of the UvrA(2)B(2) complex to a putative damaged site, the DNA wraps around one UvrB monomer. DNA wrap is dependent on ATP binding by UvrB and probably causes local melting of the DNA helix, facilitating insertion of UvrB beta-hairpin between the DNA strands. Then UvrB probes one DNA strand for the presence of a lesion. If a lesion is found the UvrA subunits dissociate and the UvrB-DNA preincision complex is formed. This complex is subsequently bound by UvrC and the second UvrB is released. If no lesion is found, the DNA wraps around the other UvrB subunit that will check the other stand for damage. In Zymomonas mobilis subsp. mobilis (strain ATCC 31821 / ZM4 / CP4), this protein is UvrABC system protein B.